Consider the following 116-residue polypeptide: NADPH-dependent 7-cyano-7-deazaguanine reductase (116 aa).

Cys31 (thioimide intermediate) is an active-site residue. The Proton donor role is filled by Asp38. Substrate-binding positions include 53-55 (VEL) and 72-73 (YE).

The protein belongs to the GTP cyclohydrolase I family. QueF type 1 subfamily.

The protein resides in the cytoplasm. The catalysed reaction is 7-aminomethyl-7-carbaguanine + 2 NADP(+) = 7-cyano-7-deazaguanine + 2 NADPH + 3 H(+). Its pathway is tRNA modification; tRNA-queuosine biosynthesis. In terms of biological role, catalyzes the NADPH-dependent reduction of 7-cyano-7-deazaguanine (preQ0) to 7-aminomethyl-7-deazaguanine (preQ1). This is NADPH-dependent 7-cyano-7-deazaguanine reductase from Chlorobium chlorochromatii (strain CaD3).